The sequence spans 246 residues: Phosducin (246 aa).

The segment covering 1-14 (MEEAASQSLEEDFE) has biased composition (acidic residues). Residues 1-70 (MEEAASQSLE…DKDSKERMSR (70 aa)) are disordered. Residues 1-246 (MEEAASQSLE…QTNTEDEDIE (246 aa)) enclose the Phosducin domain. The segment covering 58-69 (SRDDKDSKERMS) has biased composition (basic and acidic residues). Serine 73 carries the post-translational modification Phosphoserine; by PKA. The interval 111-246 (YGFVYELETG…QTNTEDEDIE (136 aa)) is thioredoxin fold.

This sequence belongs to the phosducin family. In terms of assembly, interacts with CRX. Forms a complex with the beta and gamma subunits of the GTP-binding protein, transducin. Post-translationally, light-induced changes in cyclic nucleotide levels modulate the phosphorylation of this protein by cAMP kinase.

It is found in the cytoplasm. The protein localises to the cytosol. The protein resides in the nucleus. It localises to the cell projection. Its subcellular location is the cilium. It is found in the photoreceptor outer segment. The protein localises to the photoreceptor inner segment. Its function is as follows. Inhibits the transcriptional activation activity of the cone-rod homeobox CRX. May participate in the regulation of visual phototransduction or in the integration of photoreceptor metabolism. This is Phosducin (Pdc) from Rattus norvegicus (Rat).